The sequence spans 259 residues: Hemin import ATP-binding protein HmuV (259 aa).

In terms of domain architecture, ABC transporter spans 8–242 (ISANNISYRI…KMIENVYGHK (235 aa)). An ATP-binding site is contributed by 40-47 (GPNGAGKS).

This sequence belongs to the ABC transporter superfamily. Heme (hemin) importer (TC 3.A.1.14.5) family. The complex is composed of two ATP-binding proteins (HmuV), two transmembrane proteins (HmuU) and a solute-binding protein (HmuT).

It is found in the cell inner membrane. Part of the ABC transporter complex HmuTUV involved in hemin import. Responsible for energy coupling to the transport system. In Aliivibrio fischeri (strain ATCC 700601 / ES114) (Vibrio fischeri), this protein is Hemin import ATP-binding protein HmuV.